A 281-amino-acid polypeptide reads, in one-letter code: Pantothenate synthetase (281 aa).

31 to 38 (MGALHDGH) lines the ATP pocket. Histidine 38 functions as the Proton donor in the catalytic mechanism. Residue glutamine 62 coordinates (R)-pantoate. Glutamine 62 contacts beta-alanine. 148–151 (GQKD) is a binding site for ATP. Glutamine 154 provides a ligand contact to (R)-pantoate. ATP is bound by residues valine 177 and 185–188 (LSSR).

This sequence belongs to the pantothenate synthetase family. In terms of assembly, homodimer.

Its subcellular location is the cytoplasm. The catalysed reaction is (R)-pantoate + beta-alanine + ATP = (R)-pantothenate + AMP + diphosphate + H(+). It functions in the pathway cofactor biosynthesis; (R)-pantothenate biosynthesis; (R)-pantothenate from (R)-pantoate and beta-alanine: step 1/1. Functionally, catalyzes the condensation of pantoate with beta-alanine in an ATP-dependent reaction via a pantoyl-adenylate intermediate. This Dinoroseobacter shibae (strain DSM 16493 / NCIMB 14021 / DFL 12) protein is Pantothenate synthetase.